We begin with the raw amino-acid sequence, 705 residues long: Elongation factor G (705 aa).

In terms of domain architecture, tr-type G spans 8 to 290 (HRYRNIGIMA…GVIHLLPSPA (283 aa)). GTP contacts are provided by residues 17-24 (AHIDAGKT), 88-92 (DTPGH), and 142-145 (NKMD).

It belongs to the TRAFAC class translation factor GTPase superfamily. Classic translation factor GTPase family. EF-G/EF-2 subfamily.

The protein localises to the cytoplasm. Its function is as follows. Catalyzes the GTP-dependent ribosomal translocation step during translation elongation. During this step, the ribosome changes from the pre-translocational (PRE) to the post-translocational (POST) state as the newly formed A-site-bound peptidyl-tRNA and P-site-bound deacylated tRNA move to the P and E sites, respectively. Catalyzes the coordinated movement of the two tRNA molecules, the mRNA and conformational changes in the ribosome. The chain is Elongation factor G from Xylella fastidiosa (strain 9a5c).